The sequence spans 444 residues: Type I restriction enzyme EcoDI specificity subunit (444 aa).

It belongs to the type-I restriction system S methylase family. The type I restriction/modification system is composed of three polypeptides R, M and S; the restriction enzyme has stoichiometry R(2)M(2)S(1) while the methyltransferase is M(2)S(1).

Functionally, the specificity (S) subunit of a type I restriction enzyme; this subunit dictates DNA sequence specificity. The M and S subunits together form a methyltransferase (MTase) that methylates two adenine residues of the sequence 5'-TTAN(7)GTCY-3'. In the presence of the R subunit the complex can also act as an endonuclease, binding to the same target sequence but cutting the DNA some distance from this site. Whether the DNA is cut or modified depends on the methylation state of the target sequence. When the target site is unmodified, the DNA is cut. When the target site is hemimethylated, the complex acts as a maintenance MTase modifying the DNA so that both strands become methylated. After locating a non-methylated recognition site, the enzyme complex serves as a molecular motor that translocates DNA in an ATP-dependent manner until a collision occurs that triggers cleavage. The protein is Type I restriction enzyme EcoDI specificity subunit of Escherichia coli.